The primary structure comprises 243 residues: ATP synthase subunit a (243 aa).

The next 7 membrane-spanning stretches (helical) occupy residues 29-49 (NASL…YIGL), 54-74 (IIPN…VSTI), 89-109 (VFTI…PLGF), 114-134 (HIAV…IIGF), 144-164 (ILLP…IELF), 182-202 (IAGH…NIFL), and 208-228 (IFII…AYIF).

This sequence belongs to the ATPase A chain family. F-type ATPases have 2 components, CF(1) - the catalytic core - and CF(0) - the membrane proton channel. CF(1) has five subunits: alpha(3), beta(3), gamma(1), delta(1), epsilon(1). CF(0) has three main subunits: a(1), b(2) and c(9-12). The alpha and beta chains form an alternating ring which encloses part of the gamma chain. CF(1) is attached to CF(0) by a central stalk formed by the gamma and epsilon chains, while a peripheral stalk is formed by the delta and b chains.

It localises to the cell inner membrane. Functionally, key component of the proton channel; it plays a direct role in the translocation of protons across the membrane. The sequence is that of ATP synthase subunit a from Ehrlichia canis (strain Jake).